Reading from the N-terminus, the 569-residue chain is 4-coumarate-CoA ligase 2 (569 aa).

Positions 1-24 (MITIAESHPQIHHSPPDTTAPSTP) are disordered. Residues 216 to 220 (SSGTT), H265, 337 to 339 (AAP), 359 to 360 (QG), T364, D448, R463, and K554 contribute to the ATP site. Positions 290 to 359 (EMEGMLETIQ…GRLPQAVLGQ (70 aa)) are SBD1. The interval 360 to 427 (GYGMTEAGPV…VRGPQIMKGY (68 aa)) is SBD2.

The protein belongs to the ATP-dependent AMP-binding enzyme family. In terms of tissue distribution, mostly expressed in stems, and, to a lower extent, in bulbs.

It catalyses the reaction (E)-4-coumarate + ATP + CoA = (E)-4-coumaroyl-CoA + AMP + diphosphate. Its pathway is phytoalexin biosynthesis; 3,4',5-trihydroxystilbene biosynthesis; 3,4',5-trihydroxystilbene from trans-4-coumarate: step 1/2. Functionally, produces CoA thioesters of a variety of hydroxy- and methoxy-substituted cinnamic acids, which are used to synthesize several phenylpropanoid-derived compounds, including anthocyanins, flavonoids, isoflavonoids, coumarins, lignin, suberin and wall-bound phenolics. This is 4-coumarate-CoA ligase 2 from Narcissus pseudonarcissus (Daffodil).